The sequence spans 188 residues: Elongation factor P (188 aa).

It belongs to the elongation factor P family.

Its subcellular location is the cytoplasm. It functions in the pathway protein biosynthesis; polypeptide chain elongation. Involved in peptide bond synthesis. Stimulates efficient translation and peptide-bond synthesis on native or reconstituted 70S ribosomes in vitro. Probably functions indirectly by altering the affinity of the ribosome for aminoacyl-tRNA, thus increasing their reactivity as acceptors for peptidyl transferase. The sequence is that of Elongation factor P from Wolbachia sp. subsp. Drosophila simulans (strain wRi).